Consider the following 1757-residue polypeptide: Serine/threonine-protein kinase WNK3 (1757 aa).

A disordered region spans residues 1 to 25 (MATDSGEPASTEDSEKPDGVSFENR). Residue Ser62 is modified to Phosphoserine. Positions 66–82 (TEDDKVAESSRRDERKA) are enriched in basic and acidic residues. Positions 66 to 85 (TEDDKVAESSRRDERKAATN) are disordered. The Protein kinase domain maps to 146–404 (LKFDIELGRG…IKDLLNHAFF (259 aa)). Residues 226-229 (TELM) and Lys276 contribute to the ATP site. The Proton acceptor role is filled by Asp293. A phosphoserine; by autocatalysis mark is found at Ser303 and Ser307. Residues 536–546 (EYEETEVDQHV) are interaction with KLHL3. Thr540 carries the post-translational modification Phosphothreonine. 3 stretches are compositionally biased toward polar residues: residues 551–570 (LQGKPQQQSSSVRGDTSSEP), 578–604 (SDTSSHPTVAYSSNQTTSSQEQPKLTQ), and 674–689 (SVKENTNNPDTPSGNG). Disordered regions lie at residues 551–604 (LQGK…KLTQ) and 674–705 (SVKENTNNPDTPSGNGKQDRNKQRRASCPRPE). The residue at position 1039 (Ser1039) is a Phosphoserine. The segment covering 1404 to 1422 (VATEKNVTSTTEVSVQSGS) has biased composition (polar residues). Disordered regions lie at residues 1404–1440 (VATEKNVTSTTEVSVQSGSEPLDKEKNESTPGKQTCT), 1479–1498 (SLFYSPSSPMSSDNESEIED), and 1536–1574 (ATKDNKAQSSEVPLSPASPRRPRSFKSKLRSRPQSMTHS). A compositionally biased stretch (low complexity) spans 1479–1491 (SLFYSPSSPMSSD). Ser1550 and Ser1553 each carry phosphoserine. Over residues 1555–1566 (RRPRSFKSKLRS) the composition is skewed to basic residues. Ser1595 carries the post-translational modification Phosphoserine. 2 disordered regions span residues 1621 to 1650 (HFPSKPSLNQLKQSQQKSEAENWNKSCEST) and 1734 to 1757 (PGMNLQSFPAPPVQNPASIPPGPK). Residues 1624–1637 (SKPSLNQLKQSQQK) show a composition bias toward low complexity. Residues 1641-1650 (ENWNKSCEST) are compositionally biased toward polar residues. A compositionally biased stretch (pro residues) spans 1742–1757 (PAPPVQNPASIPPGPK).

This sequence belongs to the protein kinase superfamily. Ser/Thr protein kinase family. WNK subfamily. Interacts with WNK1 and WNK4. It depends on Mg(2+) as a cofactor. Post-translationally, autophosphorylated at Ser-303 and Ser-307, promoting its activity. Phosphorylation at Thr-540 prevents interaction with KLHL3 and subsequent ubiquitination and degradation by the BCR(KLHL3) complex. Ubiquitinated by the BCR(KLHL2) complex, leading to its degradation. Ubiquitinated by the BCR(KLHL3) complex, leading to its degradation. As to expression, expressed in pancreatic duct.

It is found in the cytoplasm. It catalyses the reaction L-seryl-[protein] + ATP = O-phospho-L-seryl-[protein] + ADP + H(+). The enzyme catalyses L-threonyl-[protein] + ATP = O-phospho-L-threonyl-[protein] + ADP + H(+). With respect to regulation, activated in response to hyperosmotic stress: cell shrinkage promotes formation of a membraneless compartment that concentrates WNK3 with its substrates, OXSR1/OSR1 and STK39/SPAK. Activation requires autophosphorylation of Ser-307 and, to a lower extent, Ser-303. Autophosphorylation and subsequent activation is inhibited by increases in intracellular ionic strength: Cl(-) potently inhibits WNK3 kinase activity via direct binding. Also inhibited by K(+) ions. Kinase activity is inhibited by WNK4. Its function is as follows. Serine/threonine-protein kinase component of the WNK3-SPAK/OSR1 kinase cascade, which plays an important role in the regulation of electrolyte homeostasis and regulatory volume increase in response to hyperosmotic stress. WNK3 mediates regulatory volume increase in response to hyperosmotic stress by acting as a molecular crowding sensor, which senses cell shrinkage and mediates formation of a membraneless compartment by undergoing liquid-liquid phase separation. The membraneless compartment concentrates WNK3 with its substrates, OXSR1/OSR1 and STK39/SPAK, promoting WNK3-dependent phosphorylation and activation of downstream kinases OXSR1/OSR1 and STK39/SPAK. Following activation, OXSR1/OSR1 and STK39/SPAK catalyze phosphorylation of ion cotransporters SLC12A1/NKCC2, SLC12A2/NKCC1, SLC12A3/NCC, SLC12A4/KCC1, SLC12A5/KCC2 or SLC12A6/KCC3, regulating their activity. Phosphorylation of Na-K-Cl cotransporters SLC12A2/NKCC1 and SLC12A2/NKCC1 promote their activation and ion influx; simultaneously, phosphorylation of K-Cl cotransporters SLC12A4/KCC1, SLC12A5/KCC2 and SLC12A6/KCC3 inhibits its activity, blocking ion efflux. Phosphorylates WNK4, possibly regulating the activity of SLC12A3/NCC. May also phosphorylate NEDD4L. Also acts as a scaffold protein independently of its protein kinase activity: negatively regulates cell membrane localization of various transporters and channels, such as KCNJ1 and SLC26A9. Increases Ca(2+) influx mediated by TRPV5 and TRPV6 by enhancing their membrane expression level via a kinase-dependent pathway. This chain is Serine/threonine-protein kinase WNK3, found in Mus musculus (Mouse).